A 105-amino-acid chain; its full sequence is MTANRLVLTGTVCKALIRKVSPAGIPHCQFVIEHRSTQEEAGLKRQSWCRMPIIASGKALQTDTHSITVGSKVTVSGFISSHQARNGLFKLVLHAEQIELIDSGD.

The region spanning Met1–Asp102 is the SSB domain.

This sequence belongs to the PriB family. In terms of assembly, homodimer. Interacts with PriA and DnaT. Component of the replication restart primosome. Primosome assembly occurs via a 'hand-off' mechanism. PriA binds to replication forks, subsequently PriB then DnaT bind; DnaT then displaces ssDNA to generate the helicase loading substrate.

In terms of biological role, involved in the restart of stalled replication forks, which reloads the replicative helicase on sites other than the origin of replication; the PriA-PriB pathway is the major replication restart pathway. During primosome assembly it facilitates complex formation between PriA and DnaT on DNA; stabilizes PriA on DNA. Stimulates the DNA unwinding activity of PriA helicase. The polypeptide is Replication restart protein PriB (Proteus mirabilis (strain HI4320)).